Consider the following 171-residue polypeptide: MSDYKVNEATIAKKAELVDVYAQKMTEAASIVVADSRGLSVDQDTQLRKQLREAGVEFKVVKNSVLRRAAEKAGLEGLSEAFSGPSAVAFSNEDVVAPAKVLADFAKDAENLEIKAGVIEGKVSSKEEIQAIASLPSRDGLLSMLLSVLQAPVRNVALAVKAVAEKEESAA.

The protein belongs to the universal ribosomal protein uL10 family. In terms of assembly, part of the ribosomal stalk of the 50S ribosomal subunit. The N-terminus interacts with L11 and the large rRNA to form the base of the stalk. The C-terminus forms an elongated spine to which L12 dimers bind in a sequential fashion forming a multimeric L10(L12)X complex.

In terms of biological role, forms part of the ribosomal stalk, playing a central role in the interaction of the ribosome with GTP-bound translation factors. The polypeptide is Large ribosomal subunit protein uL10 (rplJ) (Lactococcus lactis subsp. lactis (strain IL1403) (Streptococcus lactis)).